The sequence spans 109 residues: Large ribosomal subunit protein bL31B (109 aa).

A disordered region spans residues 79-109 (NVRQPAQQPQPEEDALPAAKGKKKVVTKKKK). The segment covering 98–109 (KGKKKVVTKKKK) has biased composition (basic residues).

The protein belongs to the bacterial ribosomal protein bL31 family. Type B subfamily. Part of the 50S ribosomal subunit.

This is Large ribosomal subunit protein bL31B from Chlamydia pneumoniae (Chlamydophila pneumoniae).